We begin with the raw amino-acid sequence, 103 residues long: uncharacterized protein (103 aa).

It is found in the mitochondrion. This is an uncharacterized protein from Claviceps purpurea (Ergot fungus).